The following is a 90-amino-acid chain: MAEENVIFVGKKPTMNYVLAIVTQFNNNSTSRIVIKARGKAISKAVDIAEITRHKFIQDAKYDEIKLDTESLQGEKGESNVSSIEIVLTR.

Lysine 11 carries the post-translational modification N6-acetyllysine.

The protein belongs to the histone-like Alba family. Post-translationally, acetylated. Acetylation at Lys-11 decreases DNA-binding affinity.

It localises to the cytoplasm. It is found in the chromosome. In terms of biological role, binds double-stranded DNA tightly but without sequence specificity. Involved in DNA compaction. This Picrophilus torridus (strain ATCC 700027 / DSM 9790 / JCM 10055 / NBRC 100828 / KAW 2/3) protein is DNA/RNA-binding protein Alba.